Consider the following 360-residue polypeptide: Peptide chain release factor 1 (360 aa).

Q234 carries the N5-methylglutamine modification.

This sequence belongs to the prokaryotic/mitochondrial release factor family. Methylated by PrmC. Methylation increases the termination efficiency of RF1.

It is found in the cytoplasm. In terms of biological role, peptide chain release factor 1 directs the termination of translation in response to the peptide chain termination codons UAG and UAA. The polypeptide is Peptide chain release factor 1 (Clostridium botulinum (strain Eklund 17B / Type B)).